A 265-amino-acid polypeptide reads, in one-letter code: 4-hydroxy-tetrahydrodipicolinate reductase (265 aa).

Residue 9–14 (GPRGRM) participates in NAD(+) binding. Residue Lys-37 coordinates NADP(+). NAD(+) is bound by residues 99-101 (GTT) and 125-128 (APNF). The active-site Proton donor/acceptor is the His-155. His-156 contributes to the (S)-2,3,4,5-tetrahydrodipicolinate binding site. Lys-159 (proton donor) is an active-site residue. Residue 165–166 (GT) participates in (S)-2,3,4,5-tetrahydrodipicolinate binding. The span at 178-190 (RESQKQGHPKEEE) shows a compositional bias: basic and acidic residues. Residues 178 to 200 (RESQKQGHPKEEETLPGARGADM) are disordered.

This sequence belongs to the DapB family.

It localises to the cytoplasm. It carries out the reaction (S)-2,3,4,5-tetrahydrodipicolinate + NAD(+) + H2O = (2S,4S)-4-hydroxy-2,3,4,5-tetrahydrodipicolinate + NADH + H(+). It catalyses the reaction (S)-2,3,4,5-tetrahydrodipicolinate + NADP(+) + H2O = (2S,4S)-4-hydroxy-2,3,4,5-tetrahydrodipicolinate + NADPH + H(+). Its pathway is amino-acid biosynthesis; L-lysine biosynthesis via DAP pathway; (S)-tetrahydrodipicolinate from L-aspartate: step 4/4. In terms of biological role, catalyzes the conversion of 4-hydroxy-tetrahydrodipicolinate (HTPA) to tetrahydrodipicolinate. The sequence is that of 4-hydroxy-tetrahydrodipicolinate reductase from Oceanobacillus iheyensis (strain DSM 14371 / CIP 107618 / JCM 11309 / KCTC 3954 / HTE831).